A 1041-amino-acid polypeptide reads, in one-letter code: FHIP family protein CG3558 (1041 aa).

Serine 490 is modified (phosphoserine). Disordered regions lie at residues 619 to 648 (RPAD…SSSL), 792 to 818 (KGNE…QGQL), 858 to 879 (SMFS…SASS), 903 to 947 (DGRG…SNSS), and 959 to 986 (SNTT…SEPA). Positions 628–637 (TDTTVATTAS) are enriched in polar residues. Phosphoserine is present on serine 797. A compositionally biased stretch (polar residues) spans 800–818 (HHSQQQQMVTNSGQQQGQL). Over residues 903-925 (DGRGISQAQTSAGTCETSLSTQP) the composition is skewed to polar residues. Over residues 927-947 (AGASRTGANATSTAASGSNSS) the composition is skewed to low complexity. The span at 959-968 (SNTTTHSAST) shows a compositional bias: polar residues.

This sequence belongs to the FHIP family.

The chain is FHIP family protein CG3558 from Drosophila melanogaster (Fruit fly).